A 21-amino-acid chain; its full sequence is Tricyclic peptide MS-271 (21 aa).

Residues Cys-1–Asp-9 constitute a cross-link (3-cysteinyl-aspartic acid (Cys-Asp)). 2 disulfides stabilise this stretch: Cys-1-Cys-13 and Cys-7-Cys-19. The residue at position 21 (Trp-21) is a D-tryptophan.

In terms of biological role, inhibits chicken myosin light chain kinase with an IC(50) of 8 M. Does not inhibit bovine cAMP-dependent protein kinase or rat protein kinase C. Antibacterial activity against the Gram-positive bacteria B.subtilis, E.faecium and S.aureus. No antibacterial activity against the Gram-negative bacteria E.coli, K.pneumoniae, P.aeruginosa, P.vulgaris, S.sonnei and S.typhosa. No antifungal activity against C.albicans. The protein is Tricyclic peptide MS-271 of Streptomyces sp.